A 400-amino-acid polypeptide reads, in one-letter code: LIM/homeobox protein Lhx3 (400 aa).

2 consecutive LIM zinc-binding domains span residues 34-84 (CAGC…CKDD) and 93-147 (CAAC…CKAD). Position 74 is a phosphoserine (S74). The homeobox DNA-binding region spans 160 to 219 (AKRPRTTITAKQLETLKSAYNTSPKPARHVREQLSSETGLDMRVVQVWFQNRRAKEKRLK). Disordered stretches follow at residues 215 to 280 (EKRL…SSLG) and 297 to 400 (TLDH…HAQF). At Y230 the chain carries Phosphotyrosine. S237 and S241 each carry phosphoserine. Pro residues-rich tracts occupy residues 319–334 (GIPP…PGPQ) and 352–361 (SGPPGGPPPM). The span at 368-380 (GPSSDLSTESSSG) shows a compositional bias: polar residues.

As to quaternary structure, interacts with POU1F1. At neuronal promoters, interacts with LDB1, in motor neurons LDB1 is displaced by ISL1 and a ternary complex is formed in which ISL1 contacts both LHX3 and LDB1; allosteric structural changes in the DNA binding domain of LHX3, induced by the ISL1-LHX3 interaction, may explain differences in sequence specificity of the different complexes. Interacts with LDB2. May interact with CITED2/MRG1. As to expression, mostly expressed in the pituitary anterior and intermediate lobes. It is also expressed in the pineal gland and transiently in the primordia of motor neurons including the spinal cord, pons and medulla oblongata.

Its subcellular location is the nucleus. In terms of biological role, transcription factor. Recognizes and binds to the consensus sequence motif 5'-AATTAATTA-3' in the regulatory elements of target genes, such as glycoprotein hormones alpha chain CGA and visual system homeobox CHX10, positively modulating transcription; transcription can be co-activated by LDB2. Synergistically enhances transcription from the prolactin promoter in cooperation with POU1F1/Pit-1. Required for the establishment of the specialized cells of the pituitary gland and the nervous system. Involved in the development of interneurons and motor neurons in cooperation with LDB1 and ISL1. This chain is LIM/homeobox protein Lhx3 (Lhx3), found in Mus musculus (Mouse).